Reading from the N-terminus, the 102-residue chain is Signal recognition particle 19 kDa protein (102 aa).

This sequence belongs to the SRP19 family. As to quaternary structure, part of the signal recognition particle protein translocation system, which is composed of SRP and FtsY. Archaeal SRP consists of a 7S RNA molecule of 300 nucleotides and two protein subunits: SRP54 and SRP19.

The protein resides in the cytoplasm. Involved in targeting and insertion of nascent membrane proteins into the cytoplasmic membrane. Binds directly to 7S RNA and mediates binding of the 54 kDa subunit of the SRP. This chain is Signal recognition particle 19 kDa protein, found in Saccharolobus solfataricus (strain ATCC 35092 / DSM 1617 / JCM 11322 / P2) (Sulfolobus solfataricus).